The primary structure comprises 319 residues: Acetyl-coenzyme A carboxylase carboxyl transferase subunit alpha (319 aa).

Residues 35-296 enclose the CoA carboxyltransferase C-terminal domain; the sequence is DLEKEIKQLE…KQRLLEQLKE (262 aa).

The protein belongs to the AccA family. As to quaternary structure, acetyl-CoA carboxylase is a heterohexamer composed of biotin carboxyl carrier protein (AccB), biotin carboxylase (AccC) and two subunits each of ACCase subunit alpha (AccA) and ACCase subunit beta (AccD).

The protein resides in the cytoplasm. The catalysed reaction is N(6)-carboxybiotinyl-L-lysyl-[protein] + acetyl-CoA = N(6)-biotinyl-L-lysyl-[protein] + malonyl-CoA. It participates in lipid metabolism; malonyl-CoA biosynthesis; malonyl-CoA from acetyl-CoA: step 1/1. Functionally, component of the acetyl coenzyme A carboxylase (ACC) complex. First, biotin carboxylase catalyzes the carboxylation of biotin on its carrier protein (BCCP) and then the CO(2) group is transferred by the carboxyltransferase to acetyl-CoA to form malonyl-CoA. In Aliivibrio fischeri (strain MJ11) (Vibrio fischeri), this protein is Acetyl-coenzyme A carboxylase carboxyl transferase subunit alpha.